The primary structure comprises 100 residues: Putative septation protein SpoVG (100 aa).

The protein belongs to the SpoVG family.

Functionally, could be involved in septation. This chain is Putative septation protein SpoVG, found in Staphylococcus aureus (strain JH1).